We begin with the raw amino-acid sequence, 217 residues long: MNQTLLSDFGTPVERVERAIDALRNGRGVMVLDDESRENEGDMVFAAEAMTLEQMALTIRHGSGIVCLCITDERRQQLDLPMMVTHNSSQFQTAFTVTIEAAEGVTTGVSAADRLTTIRKAIADNAKPADLNRPGHVFPLRGQPGGVLSRRGHTEASIDLATLAGYKPAGVLCELTNDDGSMAHAPEVIAFAKLHDMPVVTIDDLAAYLQSRAKKAS.

D-ribulose 5-phosphate contacts are provided by residues 37–38, D42, 150–154, and E174; these read RE and RRGHT. E38 provides a ligand contact to Mg(2+). Position 153 (H153) interacts with Mg(2+).

The protein belongs to the DHBP synthase family. Homodimer. Requires Mg(2+) as cofactor. Mn(2+) serves as cofactor.

The catalysed reaction is D-ribulose 5-phosphate = (2S)-2-hydroxy-3-oxobutyl phosphate + formate + H(+). The protein operates within cofactor biosynthesis; riboflavin biosynthesis; 2-hydroxy-3-oxobutyl phosphate from D-ribulose 5-phosphate: step 1/1. Its function is as follows. Catalyzes the conversion of D-ribulose 5-phosphate to formate and 3,4-dihydroxy-2-butanone 4-phosphate. This Yersinia pseudotuberculosis serotype O:1b (strain IP 31758) protein is 3,4-dihydroxy-2-butanone 4-phosphate synthase.